Here is a 171-residue protein sequence, read N- to C-terminus: Disulfide bond formation protein B (171 aa).

At 1–8 (MQWSYRFV) the chain is on the cytoplasmic side. The helical transmembrane segment at 9 to 25 (SGLLVLASIVGMTFALY) threads the bilayer. Residues 26-43 (LEHFKGLEPCPLCIFQRV) lie on the Periplasmic side of the membrane. Residues Cys-35 and Cys-38 are joined by a disulfide bond. The chain crosses the membrane as a helical span at residues 44-60 (GLMAMGIVALIAFLHNP). The Cytoplasmic segment spans residues 61-67 (VSNAFKR). A helical transmembrane segment spans residues 68-85 (VYAFLATLGILWSVGVAI). The Periplasmic segment spans residues 86–142 (RHVWLQTLPPDQVPSCGPGLNYLLDALPLKTVLQQVLQGSGECAAIHWTFLGQSLPV). Cysteines 101 and 128 form a disulfide. Residues 143 to 161 (WSLAYFSLILLVCVWQLLR) form a helical membrane-spanning segment. Residues 162–171 (RYPVIVTKKK) are Cytoplasmic-facing.

This sequence belongs to the DsbB family.

It localises to the cell inner membrane. Functionally, required for disulfide bond formation in some periplasmic proteins. Acts by oxidizing the DsbA protein. The sequence is that of Disulfide bond formation protein B from Acinetobacter baylyi (strain ATCC 33305 / BD413 / ADP1).